Here is a 57-residue protein sequence, read N- to C-terminus: UPF0509 protein YciZ (57 aa).

It belongs to the UPF0509 family.

The polypeptide is UPF0509 protein YciZ (Escherichia coli O127:H6 (strain E2348/69 / EPEC)).